We begin with the raw amino-acid sequence, 674 residues long: DNA ligase (674 aa).

Residues 42–46, 91–92, and glutamate 121 contribute to the NAD(+) site; these read DNVYD and SM. Lysine 123 functions as the N6-AMP-lysine intermediate in the catalytic mechanism. Residues arginine 144, glutamate 178, lysine 294, and lysine 318 each contribute to the NAD(+) site. 4 residues coordinate Zn(2+): cysteine 412, cysteine 415, cysteine 430, and cysteine 435. One can recognise a BRCT domain in the interval 596–674; it reads VKDSFVAGKT…ETELLANLKD (79 aa).

Belongs to the NAD-dependent DNA ligase family. LigA subfamily. Mg(2+) serves as cofactor. The cofactor is Mn(2+).

It carries out the reaction NAD(+) + (deoxyribonucleotide)n-3'-hydroxyl + 5'-phospho-(deoxyribonucleotide)m = (deoxyribonucleotide)n+m + AMP + beta-nicotinamide D-nucleotide.. Its function is as follows. DNA ligase that catalyzes the formation of phosphodiester linkages between 5'-phosphoryl and 3'-hydroxyl groups in double-stranded DNA using NAD as a coenzyme and as the energy source for the reaction. It is essential for DNA replication and repair of damaged DNA. The chain is DNA ligase from Lacticaseibacillus casei (strain BL23) (Lactobacillus casei).